A 231-amino-acid chain; its full sequence is Putative N-acetylmannosamine-6-phosphate 2-epimerase (231 aa).

The protein belongs to the NanE family.

It carries out the reaction an N-acyl-D-glucosamine 6-phosphate = an N-acyl-D-mannosamine 6-phosphate. It functions in the pathway amino-sugar metabolism; N-acetylneuraminate degradation; D-fructose 6-phosphate from N-acetylneuraminate: step 3/5. In terms of biological role, converts N-acetylmannosamine-6-phosphate (ManNAc-6-P) to N-acetylglucosamine-6-phosphate (GlcNAc-6-P). This chain is Putative N-acetylmannosamine-6-phosphate 2-epimerase, found in Listeria innocua serovar 6a (strain ATCC BAA-680 / CLIP 11262).